Reading from the N-terminus, the 172-residue chain is 3-hydroxydecanoyl-[acyl-carrier-protein] dehydratase (172 aa).

The active site involves His71.

Belongs to the thioester dehydratase family. FabA subfamily. Homodimer.

The protein localises to the cytoplasm. It catalyses the reaction a (3R)-hydroxyacyl-[ACP] = a (2E)-enoyl-[ACP] + H2O. It carries out the reaction (3R)-hydroxydecanoyl-[ACP] = (2E)-decenoyl-[ACP] + H2O. The catalysed reaction is (2E)-decenoyl-[ACP] = (3Z)-decenoyl-[ACP]. Its pathway is lipid metabolism; fatty acid biosynthesis. Functionally, necessary for the introduction of cis unsaturation into fatty acids. Catalyzes the dehydration of (3R)-3-hydroxydecanoyl-ACP to E-(2)-decenoyl-ACP and then its isomerization to Z-(3)-decenoyl-ACP. Can catalyze the dehydratase reaction for beta-hydroxyacyl-ACPs with saturated chain lengths up to 16:0, being most active on intermediate chain length. The chain is 3-hydroxydecanoyl-[acyl-carrier-protein] dehydratase from Vibrio cholerae serotype O1 (strain ATCC 39541 / Classical Ogawa 395 / O395).